We begin with the raw amino-acid sequence, 199 residues long: NAD(P)H dehydrogenase (quinone) (199 aa).

Residues 4–190 (MLVLYYSAYG…DGARFQGRRV (187 aa)) enclose the Flavodoxin-like domain. FMN is bound by residues 10–15 (SAYGHM) and 78–80 (TRY). Tyrosine 12 is a binding site for NAD(+). Tryptophan 98 contributes to the substrate binding site. Residues 113–119 (STATQYG) and histidine 134 each bind FMN. Residues 161-181 (YGMTTTADGDGSRQPSAQELD) form a disordered region. Over residues 163-177 (MTTTADGDGSRQPSA) the composition is skewed to polar residues.

It belongs to the WrbA family. The cofactor is FMN.

The enzyme catalyses a quinone + NADH + H(+) = a quinol + NAD(+). It carries out the reaction a quinone + NADPH + H(+) = a quinol + NADP(+). The chain is NAD(P)H dehydrogenase (quinone) from Brucella canis (strain ATCC 23365 / NCTC 10854 / RM-666).